Consider the following 510-residue polypeptide: ETS translocation variant 5 (510 aa).

Positions 132-245 are disordered; it reads KPLTPPATPL…PGDSRPSYHR (114 aa). Residues 163-174 show a composition bias toward low complexity; the sequence is TPGAGPVQGVGP. Residues 211 to 224 show a composition bias toward polar residues; the sequence is QYPSEQRFQRQLSE. Position 248 is a phosphoserine (serine 248). A Glycyl lysine isopeptide (Lys-Gly) (interchain with G-Cter in SUMO2) cross-link involves residue lysine 350. The ETS DNA-binding region spans 368–448; sequence LQLWQFLVTL…AGERYVYKFV (81 aa).

The protein belongs to the ETS family. As to quaternary structure, interacts (via C-terminal) with ZMYM5 (via N-terminal 120 amino acid region). As to expression, in the brain, expressed predominantly in the cerebral cortex, the amygdala and the hypothalamus. Within the cerebral cortex, there is conspicuously high expression in cortical layers 2, 4 and 6 while expression is almost absent from layers 1, 3 and 5. High expression is also observed in the dorsal and ventral endopiriform claustrum. Strong expression is observed in limited parts of the amygdala including the basolateral amygdaloid nucleus, the bed stria terminalis and the central amygdaloid nucleus. Low to moderate levels are found in the hypothalamus while expression is almost absent in the thalamus. Hypothalamic expression is seen in the dorsomedial hypothalamic nucleus and also the central, dorsomedial and ventrolateral parts of the ventromedial hypothalamic nucleus. Strong expression is also identified in the nigrostriatal tract. In the mesencephalon, expression is restricted to the ventral tegmental area including the parabrachial pigmented nucleus. In the hippocampus, strongly expressed in the pyramidal cell layer. Some expression is also found in the lacunosum moleculare layer. Low levels of expression in the cerebellum, including the granular, molecular and Purkinje cell layers.

It is found in the nucleus. Binds to DNA sequences containing the consensus nucleotide core sequence 5'-GGAA.-3'. This chain is ETS translocation variant 5 (Etv5), found in Mus musculus (Mouse).